We begin with the raw amino-acid sequence, 252 residues long: Small ribosomal subunit protein uS2 (252 aa).

Serine 2 is subject to N-acetylserine. Residues 213 to 222 (QVAEETAGAA) are compositionally biased toward low complexity. Residues 213–252 (QVAEETAGAATEEEEAKEEVTEEQTEATEWAEETTEAVAW) are disordered. Over residues 223 to 252 (TEEEEAKEEVTEEQTEATEWAEETTEAVAW) the composition is skewed to acidic residues.

It belongs to the universal ribosomal protein uS2 family. Component of the small ribosomal subunit. Mature ribosomes consist of a small (40S) and a large (60S) subunit. The 40S subunit contains about 33 different proteins and 1 molecule of RNA (18S). The 60S subunit contains about 49 different proteins and 3 molecules of RNA (25S, 5.8S and 5S). Interacts with RPS21.

The protein resides in the cytoplasm. In terms of biological role, required for the assembly and/or stability of the 40S ribosomal subunit. Required for the processing of the 20S rRNA-precursor to mature 18S rRNA in a late step of the maturation of 40S ribosomal subunits. This Zygosaccharomyces rouxii (strain ATCC 2623 / CBS 732 / NBRC 1130 / NCYC 568 / NRRL Y-229) protein is Small ribosomal subunit protein uS2.